Here is a 188-residue protein sequence, read N- to C-terminus: Large ribosomal subunit protein eL18 (188 aa).

Residues 153–188 (GKAPGTPHSHTKPYIRSKGRKFERARGRRASRGYKN) are disordered. 2 stretches are compositionally biased toward basic residues: residues 161-171 (SHTKPYIRSKG) and 178-188 (RGRRASRGYKN).

This sequence belongs to the eukaryotic ribosomal protein eL18 family. In terms of assembly, component of the large ribosomal subunit.

It is found in the cytoplasm. The protein resides in the cytosol. It localises to the rough endoplasmic reticulum. Its function is as follows. Component of the large ribosomal subunit. The ribosome is a large ribonucleoprotein complex responsible for the synthesis of proteins in the cell. The sequence is that of Large ribosomal subunit protein eL18 (rpl18) from Ictalurus punctatus (Channel catfish).